The sequence spans 364 residues: Acidic fibroblast growth factor intracellular-binding protein (364 aa).

Position 2 is an N-acetylthreonine (Thr2).

As to quaternary structure, binds to internalized FGF1; this interaction is increased in the presence of CSNKB, suggesting a possible cooperative interaction between CSNKB and FIBP in binding to FGF1. Highly expressed in heart, skeletal muscle and pancreas. Expressed at lower levels in brain. Also found in placenta, liver and kidney.

The protein resides in the nucleus. The protein localises to the endomembrane system. May be involved in mitogenic function of FGF1. May mediate with IER2 FGF-signaling in the establishment of laterality in the embryo. The chain is Acidic fibroblast growth factor intracellular-binding protein (FIBP) from Homo sapiens (Human).